Consider the following 294-residue polypeptide: RNA polymerase sigma-K factor (294 aa).

The propeptide occupies 1–20 (MVTGVFAALGFVVKELVFLV). Residues 1–156 (MVTGVFAALG…VNNCFFIFKS (156 aa)) are encoded by spoIVCB. A Polymerase core binding motif is present at residues 79–92 (DLISIGTIGLIKGI). The not present in recombined mature factor stretch occupies residues 114 to 165 (EIVITKGGCIHPSLIRFNIYGVRIHNGNFFHDKVNNCFFIFKSMPPLFVMNN). The segment at 157–294 (MPPLFVMNNE…KEKRKKAKGK (138 aa)) is encoded by spoIIIC. Residues 251 to 270 (QREIAKELGISRSYVSRIEK) constitute a DNA-binding region (H-T-H motif).

It belongs to the sigma-70 factor family.

Sigma factors are initiation factors that promote the attachment of RNA polymerase to specific initiation sites and are then released. This sigma factor is responsible for the expression of sporulation specific genes in the mother cell. The protein is RNA polymerase sigma-K factor (sigK) of Bacillus subtilis (strain 168).